We begin with the raw amino-acid sequence, 237 residues long: uncharacterized protein (237 aa).

21–28 (GCDGSGKS) contacts ATP.

This sequence to E.coli YghR and YghT.

This is an uncharacterized protein from Escherichia coli (strain K12).